Here is a 1426-residue protein sequence, read N- to C-terminus: A disintegrin and metalloproteinase with thrombospondin motifs 13 (1426 aa).

The first 33 residues, 1 to 33 (MSQLCLWLTCQPCYAVSVRGILTGAIFILGCWG), serve as a signal peptide directing secretion. The propeptide occupies 34–76 (LSDFQKSLLQDLEPKDVSSYFGHHAAPFTGHPPSHLQRLRRRR). The Peptidase M12B domain occupies 74–291 (RRRTLEDILH…GQMHCFQDPP (218 aa)). A Ca(2+)-binding site is contributed by glutamate 85. Asparagine 144 and asparagine 148 each carry an N-linked (GlcNAc...) asparagine glycan. Cystine bridges form between cysteine 157-cysteine 210, cysteine 204-cysteine 286, and cysteine 246-cysteine 270. Ca(2+) contacts are provided by aspartate 175, aspartate 184, glutamate 186, aspartate 189, and glutamate 214. Residue histidine 226 participates in Zn(2+) binding. Residue glutamate 227 is part of the active site. Zn(2+) contacts are provided by histidine 230 and histidine 236. The Ca(2+) site is built by threonine 281 and aspartate 289. A Disintegrin domain is found at 295-388 (SGLTRHQLMA…LAELAPVAAV (94 aa)). 11 disulfide bridges follow: cysteine 316–cysteine 342, cysteine 327–cysteine 352, cysteine 337–cysteine 371, cysteine 365–cysteine 376, cysteine 401–cysteine 438, cysteine 405–cysteine 443, cysteine 416–cysteine 428, cysteine 488–cysteine 527, cysteine 513–cysteine 532, cysteine 537–cysteine 553, and cysteine 550–cysteine 560. Residues 389 to 444 (HGHWSSWGPHSPCSRSCGGGVITRRRWCNNPRPAFGGRACVGEDLQAKMCNTQACE) form the TSP type-1 1 domain. The segment at 445–561 (KTQLEFMSEQ…VCGGDNSTCS (117 aa)) is cysteine-rich. The Cell attachment site motif lies at 503–505 (RGD). The spacer stretch occupies residues 556 to 685 (DNSTCSSRNG…PDITFSYFQL (130 aa)). N-linked (GlcNAc...) asparagine glycosylation is found at asparagine 557, asparagine 564, asparagine 584, and asparagine 619. TSP type-1 domains follow at residues 687-746 (QQAA…VSAP), 747-810 (CSPY…QPCP), 808-871 (PCPT…SLCS), 904-957 (WTPL…RARP), 958-1019 (CPAR…EPCP), 1020-1078 (ARWK…IADC), and 1079-1137 (AFRW…GPCA). O-linked (Fuc...) serine glycans are attached at residues serine 703 and serine 762. N-linked (GlcNAc...) asparagine glycosylation occurs at asparagine 834. O-linked (Fuc...) serine glycosylation occurs at serine 914. An O-linked (Fuc...) threonine glycan is attached at threonine 973. Serine 1033 carries O-linked (Fuc...) serine glycosylation. Asparagine 1057 carries N-linked (GlcNAc...) asparagine glycosylation. An O-linked (Fuc...) serine glycan is attached at serine 1093. CUB domains follow at residues 1195-1302 (ACGR…FYKE) and 1293-1426 (QPAP…LALS).

It depends on Zn(2+) as a cofactor. Ca(2+) serves as cofactor. In terms of processing, the precursor is processed by a furin endopeptidase which cleaves off the pro-domain. O-glycosylated. O-fucosylated by POFUT2 on a serine or a threonine residue found within the consensus sequence C1-X(2)-(S/T)-C2-G of the TSP type-1 repeat domains where C1 and C2 are the first and second cysteine residue of the repeat, respectively. Fucosylated repeats can then be further glycosylated by the addition of a beta-1,3-glucose residue by the glucosyltransferase, B3GALTL. Fucosylation mediates the efficient secretion of ADAMTS13. May also be C-glycosylated on tryptophan residues within the consensus sequence W-X-X-W of the TPRs, and also N-glycosylated. These other glycosylations can also facilitate secretion. Plasma. Expression is consistently high in liver, medium in lung and spleen, low in skeletal muscle and undetectable in heart, brain, kidney and testis.

The protein resides in the secreted. It carries out the reaction The enzyme cleaves the von Willebrand factor at bond 842-Tyr-|-Met-843 within the A2 domain.. Its activity is regulated as follows. Zinc and calcium ions cooperatively modulate enzyme activity. The cleavage of the pro-domain is not required for protease activity. Dependence on calcium for proteolytic activity is mediated by the high affinity site. Cleaves the vWF multimers in plasma into smaller forms thereby controlling vWF-mediated platelet thrombus formation. This Mus musculus (Mouse) protein is A disintegrin and metalloproteinase with thrombospondin motifs 13 (Adamts13).